A 237-amino-acid chain; its full sequence is RING finger protein vilya (237 aa).

The RING-type zinc-finger motif lies at 21–69 (CNSCCALFCDKKHTFFLLACHHVFCERCVKVSAGRTPSDAPIFECSTCR). The tract at residues 172–237 (MHRMAQAYRS…IHPPNNSFDL (66 aa)) is disordered. The span at 180 to 195 (RSRSLTSQSSSSAQRS) shows a compositional bias: low complexity. A compositionally biased stretch (polar residues) spans 221-237 (RQQITSFIHPPNNSFDL).

In terms of assembly, may interact with itself and with narya and nenya through their RING-type zinc fingers. As to expression, expressed in nurse cell and pro-oocytes (at protein level).

The protein localises to the chromosome. In terms of biological role, required for the formation of DNA double-strand breaks during meiosis together with narya and nenya. This is RING finger protein vilya from Drosophila melanogaster (Fruit fly).